Consider the following 168-residue polypeptide: DNA-binding protein inhibitor ID-1 (168 aa).

In terms of domain architecture, bHLH spans 46–98 (LPALLDEQQVNVLLYDMNGCYSRLKELVPTLPQNRKVSKVEILQHVIDYIRDL). The interaction with IFI204 stretch occupies residues 53–106 (QQVNVLLYDMNGCYSRLKELVPTLPQNRKVSKVEILQHVIDYIRDLQLELNSES). A Nuclear export signal motif is present at residues 91–104 (VIDYIRDLQLELNS).

As to quaternary structure, heterodimer with other HLH proteins. Interacts with CLOCK and BMAL1. Interacts with COPS5, IFI204, GATA4 and NKX2-5. Post-translationally, polyubiquitinated; which is favored by Ifi204 and leads to proteasomal degradation.

It localises to the cytoplasm. It is found in the nucleus. In terms of biological role, transcriptional regulator (lacking a basic DNA binding domain) which negatively regulates the basic helix-loop-helix (bHLH) transcription factors by forming heterodimers and inhibiting their DNA binding and transcriptional activity. Implicated in regulating a variety of cellular processes, including cellular growth, senescence, differentiation, apoptosis, angiogenesis, and neoplastic transformation. Inhibits skeletal muscle and cardiac myocyte differentiation. Regulates the circadian clock by repressing the transcriptional activator activity of the CLOCK-BMAL1 heterodimer. This Mus musculus (Mouse) protein is DNA-binding protein inhibitor ID-1 (Id1).